Reading from the N-terminus, the 172-residue chain is Disulfide bond formation protein B (172 aa).

The Cytoplasmic portion of the chain corresponds to 1–11; sequence MNPFRWGFRAQ. The chain crosses the membrane as a helical span at residues 12–28; that stretch reads FLLGFLACAGLLAYAIY. Residues 29-46 are Periplasmic-facing; the sequence is VQLHLGLEPCPLCIFQRI. Cysteines 38 and 41 form a disulfide. The helical transmembrane segment at 47-63 threads the bilayer; the sequence is AFATLALLFLLGALHGP. The Cytoplasmic portion of the chain corresponds to 64–70; the sequence is RGAGGRK. The chain crosses the membrane as a helical span at residues 71–88; sequence AYGVLAFIAAGVGMGIAA. Topologically, residues 89–145 are periplasmic; that stretch reads RHVWVQIRPKDMMSSCGPPLSFLSETMGPFEVFRTVLTGTGDCGNIDWRFLGLSMPM. Residues Cys104 and Cys131 are joined by a disulfide bond. The chain crosses the membrane as a helical span at residues 146 to 164; the sequence is WSMVWFVGLALWALYAGFK. The Cytoplasmic portion of the chain corresponds to 165-172; that stretch reads HRGPRKLF.

Belongs to the DsbB family.

The protein resides in the cell inner membrane. Functionally, required for disulfide bond formation in some periplasmic proteins. Acts by oxidizing the DsbA protein. The polypeptide is Disulfide bond formation protein B (Xanthomonas campestris pv. campestris (strain 8004)).